Consider the following 124-residue polypeptide: MAFKVVVSDTKSGKSYQFETESTALIGKKIGDEISGSVVELEGYKLKITGGSDKCGFAMRHDIHGAMKMRVLLKNGPGYNVKEKGLRRRKSLRGNTISKDVTLINTKVVEYGPAPLGGEPENTE.

This sequence belongs to the eukaryotic ribosomal protein eS6 family.

In Methanococcus maripaludis (strain C6 / ATCC BAA-1332), this protein is Small ribosomal subunit protein eS6.